The sequence spans 550 residues: Hydroxylamine reductase (550 aa).

Cysteine 7, cysteine 10, cysteine 19, and cysteine 25 together coordinate [4Fe-4S] cluster. Hybrid [4Fe-2O-2S] cluster contacts are provided by histidine 244, glutamate 268, cysteine 312, cysteine 405, cysteine 433, cysteine 458, glutamate 493, and lysine 495. A Cysteine persulfide modification is found at cysteine 405.

It belongs to the HCP family. [4Fe-4S] cluster is required as a cofactor. The cofactor is hybrid [4Fe-2O-2S] cluster.

Its subcellular location is the cytoplasm. The catalysed reaction is A + NH4(+) + H2O = hydroxylamine + AH2 + H(+). In terms of biological role, catalyzes the reduction of hydroxylamine to form NH(3) and H(2)O. This is Hydroxylamine reductase from Porphyromonas gingivalis (strain ATCC 33277 / DSM 20709 / CIP 103683 / JCM 12257 / NCTC 11834 / 2561).